Reading from the N-terminus, the 132-residue chain is Small ribosomal subunit protein uS8 (132 aa).

Belongs to the universal ribosomal protein uS8 family. Part of the 30S ribosomal subunit. Contacts proteins S5 and S12.

Functionally, one of the primary rRNA binding proteins, it binds directly to 16S rRNA central domain where it helps coordinate assembly of the platform of the 30S subunit. This chain is Small ribosomal subunit protein uS8, found in Paenarthrobacter aurescens (strain TC1).